The chain runs to 299 residues: Sulfotransferase 1B1 (299 aa).

Residue 48 to 53 (KSGTTW) coordinates 3'-phosphoadenylyl sulfate. A substrate-binding site is contributed by 107–109 (KTH). Catalysis depends on His-109, which acts as the Proton acceptor. Residues Arg-131, Ser-139, Tyr-194, 228–233 (TSFEMM), and 258–260 (RKG) each bind 3'-phosphoadenylyl sulfate.

Belongs to the sulfotransferase 1 family. Liver specific.

Its subcellular location is the cytoplasm. The catalysed reaction is a phenol + 3'-phosphoadenylyl sulfate = an aryl sulfate + adenosine 3',5'-bisphosphate + H(+). It catalyses the reaction 3,3',5-triiodo-L-thyronine + 3'-phosphoadenylyl sulfate = 3,3',5-triiodo-L-thyronine sulfate + adenosine 3',5'-bisphosphate + H(+). It carries out the reaction 3,3',5'-triiodo-L-thyronine + 3'-phosphoadenylyl sulfate = 3,3',5'-triiodo-L-thyronine sulfate + adenosine 3',5'-bisphosphate + H(+). The enzyme catalyses 3,3'-diiodo-L-thyronine + 3'-phosphoadenylyl sulfate = 3,3'-diiodo-L-thyronine sulfate + adenosine 3',5'-bisphosphate + H(+). The catalysed reaction is dopamine + 3'-phosphoadenylyl sulfate = dopamine 3-O-sulfate + adenosine 3',5'-bisphosphate + H(+). It catalyses the reaction dopamine + 3'-phosphoadenylyl sulfate = dopamine 4-O-sulfate + adenosine 3',5'-bisphosphate + H(+). It carries out the reaction 4-ethylphenol + 3'-phosphoadenylyl sulfate = 4-ethylphenyl sulfate + adenosine 3',5'-bisphosphate + H(+). Its function is as follows. Sulfotransferase that utilizes 3'-phospho-5'-adenylyl sulfate (PAPS) as sulfonate donor to catalyze the sulfate conjugation of dopamine, small phenols such as 1-naphthol and p-nitrophenol and thyroid hormones, including 3,3'-diiodothyronine, triidothyronine (T3) and reverse triiodothyronine (rT3). May play a role in gut microbiota-host metabolic interaction. O-sulfonates 4-ethylphenol (4-EP), a dietary tyrosine-derived metabolite produced by gut bacteria. The product 4-EPS crosses the blood-brain barrier and may negatively regulate oligodendrocyte maturation and myelination, affecting the functional connectivity of different brain regions associated with the limbic system. The polypeptide is Sulfotransferase 1B1 (Mus musculus (Mouse)).